The primary structure comprises 712 residues: Glucans biosynthesis glucosyltransferase H (712 aa).

Transmembrane regions (helical) follow at residues 57–77 (LAIMLATAALTCAGGYEMYQV), 89–109 (IVLALFAALFAWVALSFVSAL), 408–428 (GIGSYITAPMWLAFLVAGILI), 462–482 (FAGTMGLLMMPKLLALILVVI), 552–572 (YAAPSWLGAVMAVSALLVSWP), and 573–593 (LLLWMMPVILGLVLAIPVALL).

It belongs to the glycosyltransferase 2 family. OpgH subfamily.

The protein localises to the cell inner membrane. It participates in glycan metabolism; osmoregulated periplasmic glucan (OPG) biosynthesis. Functionally, involved in the biosynthesis of osmoregulated periplasmic glucans (OPGs). This Rhodopseudomonas palustris (strain BisA53) protein is Glucans biosynthesis glucosyltransferase H.